The following is a 215-amino-acid chain: Large ribosomal subunit protein uL3 (215 aa).

N5-methylglutamine is present on Gln153.

It belongs to the universal ribosomal protein uL3 family. Part of the 50S ribosomal subunit. Forms a cluster with proteins L14 and L19. In terms of processing, methylated by PrmB.

One of the primary rRNA binding proteins, it binds directly near the 3'-end of the 23S rRNA, where it nucleates assembly of the 50S subunit. The chain is Large ribosomal subunit protein uL3 from Nitrosococcus oceani (strain ATCC 19707 / BCRC 17464 / JCM 30415 / NCIMB 11848 / C-107).